A 321-amino-acid chain; its full sequence is Lipoyl synthase (321 aa).

Positions 68, 73, 79, 94, 98, 101, and 308 each coordinate [4Fe-4S] cluster. The 218-residue stretch at Phe80 to Thr297 folds into the Radical SAM core domain.

This sequence belongs to the radical SAM superfamily. Lipoyl synthase family. It depends on [4Fe-4S] cluster as a cofactor.

It is found in the cytoplasm. The catalysed reaction is [[Fe-S] cluster scaffold protein carrying a second [4Fe-4S](2+) cluster] + N(6)-octanoyl-L-lysyl-[protein] + 2 oxidized [2Fe-2S]-[ferredoxin] + 2 S-adenosyl-L-methionine + 4 H(+) = [[Fe-S] cluster scaffold protein] + N(6)-[(R)-dihydrolipoyl]-L-lysyl-[protein] + 4 Fe(3+) + 2 hydrogen sulfide + 2 5'-deoxyadenosine + 2 L-methionine + 2 reduced [2Fe-2S]-[ferredoxin]. It functions in the pathway protein modification; protein lipoylation via endogenous pathway; protein N(6)-(lipoyl)lysine from octanoyl-[acyl-carrier-protein]: step 2/2. Functionally, catalyzes the radical-mediated insertion of two sulfur atoms into the C-6 and C-8 positions of the octanoyl moiety bound to the lipoyl domains of lipoate-dependent enzymes, thereby converting the octanoylated domains into lipoylated derivatives. This chain is Lipoyl synthase, found in Escherichia coli O9:H4 (strain HS).